A 420-amino-acid polypeptide reads, in one-letter code: Glutamyl-tRNA reductase (420 aa).

Substrate is bound by residues 49-52 (TCNR), serine 109, 114-116 (EPQ), and glutamine 120. Catalysis depends on cysteine 50, which acts as the Nucleophile. 189 to 194 (GAGETI) provides a ligand contact to NADP(+).

The protein belongs to the glutamyl-tRNA reductase family. As to quaternary structure, homodimer.

It carries out the reaction (S)-4-amino-5-oxopentanoate + tRNA(Glu) + NADP(+) = L-glutamyl-tRNA(Glu) + NADPH + H(+). It participates in porphyrin-containing compound metabolism; protoporphyrin-IX biosynthesis; 5-aminolevulinate from L-glutamyl-tRNA(Glu): step 1/2. Functionally, catalyzes the NADPH-dependent reduction of glutamyl-tRNA(Glu) to glutamate 1-semialdehyde (GSA). This chain is Glutamyl-tRNA reductase, found in Photorhabdus laumondii subsp. laumondii (strain DSM 15139 / CIP 105565 / TT01) (Photorhabdus luminescens subsp. laumondii).